Reading from the N-terminus, the 510-residue chain is Xylose import ATP-binding protein XylG (510 aa).

ABC transporter domains are found at residues 5–242 (LEMK…VGRE) and 259–505 (LRVE…LRSE). ATP is bound at residue 37 to 44 (GENGSGKS).

Belongs to the ABC transporter superfamily. Xylose importer (TC 3.A.1.2.4) family. In terms of assembly, the complex is composed of two ATP-binding proteins (XylG), two transmembrane proteins (XylH) and a solute-binding protein (XylF).

It is found in the cell inner membrane. The catalysed reaction is D-xylose(out) + ATP + H2O = D-xylose(in) + ADP + phosphate + H(+). Functionally, part of the ABC transporter complex XylFGH involved in xylose import. Responsible for energy coupling to the transport system. The sequence is that of Xylose import ATP-binding protein XylG from Yersinia pestis.